The chain runs to 265 residues: Polyprenol monophosphomannose synthase (265 aa).

Residues 1–10 (MSVPGEREQG) are compositionally biased toward basic and acidic residues. The tract at residues 1–21 (MSVPGEREQGAGEDPATVRPT) is disordered.

This sequence belongs to the glycosyltransferase 2 family. In terms of assembly, interacts with Lnt (also called Ppm2, AC A0QZ13) upon coexpression in E.coli, which increases the PPM synthase activity of this protein.

Its subcellular location is the cytoplasm. The catalysed reaction is a di-trans,poly-cis-dolichyl phosphate + GDP-alpha-D-mannose = a di-trans,poly-cis-dolichyl beta-D-mannosyl phosphate + GDP. Its function is as follows. Transfers mannose from GDP-mannose to lipid acceptors to form polyprenol monophosphomannose (PPM); catalytic activity in vitro is enhanced by Lnt (AC A0QZ13). PMM is an alkai-stable sugar donor which adds mannose-phosphate residues to triacylated-PIM2, eventually leading to generation of the cell wall glycolipid lipoglycan modulins lipoarabinomannan (LAM) and lipomannan (LM). The chain is Polyprenol monophosphomannose synthase from Mycolicibacterium smegmatis (strain ATCC 700084 / mc(2)155) (Mycobacterium smegmatis).